The following is a 283-amino-acid chain: Bifunctional protein FolD (283 aa).

NADP(+)-binding positions include 165-167, S190, and I231; that span reads GRS.

Belongs to the tetrahydrofolate dehydrogenase/cyclohydrolase family. In terms of assembly, homodimer.

It catalyses the reaction (6R)-5,10-methylene-5,6,7,8-tetrahydrofolate + NADP(+) = (6R)-5,10-methenyltetrahydrofolate + NADPH. The enzyme catalyses (6R)-5,10-methenyltetrahydrofolate + H2O = (6R)-10-formyltetrahydrofolate + H(+). It functions in the pathway one-carbon metabolism; tetrahydrofolate interconversion. In terms of biological role, catalyzes the oxidation of 5,10-methylenetetrahydrofolate to 5,10-methenyltetrahydrofolate and then the hydrolysis of 5,10-methenyltetrahydrofolate to 10-formyltetrahydrofolate. In Herminiimonas arsenicoxydans, this protein is Bifunctional protein FolD.